The following is a 288-amino-acid chain: Pyrroline-5-carboxylate reductase 3 (288 aa).

This sequence belongs to the pyrroline-5-carboxylate reductase family. Homodecamer; composed of 5 homodimers.

Its subcellular location is the cytoplasm. It carries out the reaction L-proline + NADP(+) = (S)-1-pyrroline-5-carboxylate + NADPH + 2 H(+). It catalyses the reaction L-proline + NAD(+) = (S)-1-pyrroline-5-carboxylate + NADH + 2 H(+). The protein operates within amino-acid biosynthesis; L-proline biosynthesis; L-proline from L-glutamate 5-semialdehyde: step 1/1. Its function is as follows. Oxidoreductase that catalyzes the last step in proline biosynthesis, which corresponds to the reduction of pyrroline-5-carboxylate (P5C) to L-proline using NAD(P)H. Proline is synthesized from either glutamate or ornithine; both are converted to P5C, and then to proline via pyrroline-5-carboxylate reductases (PYCRs). PYCR3 is exclusively linked to the biosynthesis of proline from ornithine. The sequence is that of Pyrroline-5-carboxylate reductase 3 from Danio rerio (Zebrafish).